Consider the following 238-residue polypeptide: Ribonuclease PH (238 aa).

Phosphate-binding positions include arginine 86 and glycine 124–arginine 126.

This sequence belongs to the RNase PH family. Homohexameric ring arranged as a trimer of dimers.

It carries out the reaction tRNA(n+1) + phosphate = tRNA(n) + a ribonucleoside 5'-diphosphate. Its function is as follows. Phosphorolytic 3'-5' exoribonuclease that plays an important role in tRNA 3'-end maturation. Removes nucleotide residues following the 3'-CCA terminus of tRNAs; can also add nucleotides to the ends of RNA molecules by using nucleoside diphosphates as substrates, but this may not be physiologically important. Probably plays a role in initiation of 16S rRNA degradation (leading to ribosome degradation) during starvation. This chain is Ribonuclease PH, found in Pasteurella multocida (strain Pm70).